Consider the following 344-residue polypeptide: Heat-inducible transcription repressor HrcA (344 aa).

It belongs to the HrcA family.

In terms of biological role, negative regulator of class I heat shock genes (grpE-dnaK-dnaJ and groELS operons). Prevents heat-shock induction of these operons. The protein is Heat-inducible transcription repressor HrcA of Geobacillus stearothermophilus (Bacillus stearothermophilus).